The primary structure comprises 564 residues: Large neutral amino acids transporter small subunit 3 (564 aa).

A helical membrane pass occupies residues Val-20 to Leu-40. N-linked (GlcNAc...) asparagine glycans are attached at residues Asn-54 and Asn-57. A run of 5 helical transmembrane segments spans residues Leu-78–Met-98, Pro-105–Ala-124, Leu-131–Phe-151, Ser-165–Ile-185, and Ala-191–Leu-211. Phosphoserine is present on residues Ser-262 and Ser-267. 2 helical membrane passes run Ile-303–Gly-323 and Ser-357–Met-377. Asn-396 carries an N-linked (GlcNAc...) asparagine glycan. Residue Ser-398 is modified to Phosphoserine. 4 helical membrane-spanning segments follow: residues Ala-424–Ile-444, Leu-451–Leu-471, Leu-490–Leu-510, and Phe-515–Leu-535. Asn-558 carries an N-linked (GlcNAc...) asparagine glycan.

The protein belongs to the SLC43A transporter (TC 2.A.1.44) family. Expressed in the kidney cortex as well as liver, pancreas, and skeletal muscle. In kidney expressed in the glomerular tuft (at protein level). Expressed in liver, skeletal muscle and pancreas (at protein level).

It is found in the cell membrane. Its subcellular location is the apical cell membrane. It localises to the endoplasmic reticulum membrane. It carries out the reaction D-leucine(in) = D-leucine(out). It catalyses the reaction L-leucine(in) = L-leucine(out). The enzyme catalyses L-isoleucine(in) = L-isoleucine(out). The catalysed reaction is L-methionine(in) = L-methionine(out). It carries out the reaction L-phenylalanine(in) = L-phenylalanine(out). It catalyses the reaction L-valine(in) = L-valine(out). In terms of biological role, uniport that mediates the transport of neutral amino acids such as L-leucine, L-isoleucine, L-valine, and L-phenylalanine. The transport activity is sodium ions-independent, electroneutral and mediated by a facilitated diffusion. The protein is Large neutral amino acids transporter small subunit 3 of Mus musculus (Mouse).